Here is a 746-residue protein sequence, read N- to C-terminus: Serine/threonine-protein kinase SMU1 (746 aa).

Disordered regions lie at residues methionine 1–histidine 138 and glutamine 155–asparagine 212. 2 stretches are compositionally biased toward low complexity: residues serine 15–threonine 54 and serine 85–alanine 105. Composition is skewed to polar residues over residues leucine 106–threonine 121, arginine 128–histidine 138, and arginine 156–threonine 176. A compositionally biased stretch (basic and acidic residues) spans proline 194–aspartate 203. The region spanning isoleucine 237–glycine 250 is the CRIB domain. The disordered stretch occupies residues glycine 301–lysine 451. Polar residues predominate over residues proline 370–aspartate 380. A compositionally biased stretch (low complexity) spans serine 414–serine 430. The region spanning tyrosine 472–leucine 723 is the Protein kinase domain. ATP-binding positions include isoleucine 478–valine 486 and lysine 501. The Proton acceptor role is filled by aspartate 591.

Belongs to the protein kinase superfamily. STE Ser/Thr protein kinase family. STE20 subfamily.

It localises to the cytoplasm. Its subcellular location is the nucleus. The catalysed reaction is L-seryl-[protein] + ATP = O-phospho-L-seryl-[protein] + ADP + H(+). It carries out the reaction L-threonyl-[protein] + ATP = O-phospho-L-threonyl-[protein] + ADP + H(+). Functionally, MAP4K component of the MAPK pathway required for the mating pheromone response and the regulation of cell polarity and cell cycle. Phosphorylates histone H2B to form H2BS10ph. This Mycosarcoma maydis (Corn smut fungus) protein is Serine/threonine-protein kinase SMU1 (SMU1).